The sequence spans 174 residues: Early nodulin-11 (174 aa).

A signal peptide spans 1 to 25 (MASFFLYSLGLVFLSALTLVPLGLA). Residues 28–174 (SPSHNMPPNP…GNQPPPSIHF (147 aa)) are disordered. Pro residues predominate over residues 53 to 65 (YNPPIYKPPPTYK). Over residues 70 to 83 (KQPINKSPNKKPLL) the composition is skewed to low complexity. Positions 122-132 (PQKKPPSRKRP) are enriched in basic residues. Composition is skewed to pro residues over residues 134-150 (NTPP…PVNK) and 159-174 (KRPP…SIHF).

This sequence belongs to the plant proline-rich protein superfamily. As to expression, expressed in cotyledons, leaf vasculature, stomatal guard cells and trichomes. In the embryo, expressed in embryo suspensors, the epidermis and underlying tissues of the cotyledons, hypocotyls, and radicle in maturing embryos, and the outer cell layer of the endosperm.

It is found in the secreted. It localises to the cell wall. Functionally, involved in the infection process during the plant-rhizobium interaction. Involved in actinorhizal root nodulation. Involved in symbiotic association with the nitrogen-fixing actinomycete Frankia spp. This chain is Early nodulin-11, found in Medicago truncatula (Barrel medic).